A 129-amino-acid polypeptide reads, in one-letter code: Small ribosomal subunit protein uS12 (129 aa).

D89 is subject to 3-methylthioaspartic acid. The segment at T101 to K129 is disordered.

Belongs to the universal ribosomal protein uS12 family. Part of the 30S ribosomal subunit. Contacts proteins S8 and S17. May interact with IF1 in the 30S initiation complex.

Functionally, with S4 and S5 plays an important role in translational accuracy. Interacts with and stabilizes bases of the 16S rRNA that are involved in tRNA selection in the A site and with the mRNA backbone. Located at the interface of the 30S and 50S subunits, it traverses the body of the 30S subunit contacting proteins on the other side and probably holding the rRNA structure together. The combined cluster of proteins S8, S12 and S17 appears to hold together the shoulder and platform of the 30S subunit. This Chlorobium luteolum (strain DSM 273 / BCRC 81028 / 2530) (Pelodictyon luteolum) protein is Small ribosomal subunit protein uS12.